The primary structure comprises 959 residues: MSSFGNNAGGGGREYHDDRSNRDHRHGNGGSDAGQRRREDHNSSYQSYRRPDGRQDSYGGGHQGNHGNSYGRREDDRSHSRDNHGGSRYGERDDRGNNGRSADNRYSQSNYNYDSNRGGQHYQRDNHGSKDDRGPMNQYNDHGSNHNSNSRNDQYRQGSYQGDGHSGYRRDDDRRRNDNDQARPYQSNRDSDRNSPRDHHNYNSQSSPRSHQGGQDRYSAPKEDNQRRYDNHQGGHDSYRGQNSGGYSGNNSGEYRNDYRSQQDSRDHRSGGNNSSSGFKNDGGFGGNDNRGFGNNGGGSFGNPNNSYRGNSNNIGGFHRSDGSNSEGVNAPVRAPRDWVPVTRDIDELVRETADRLADCDVGQDRAVEIRNAEKDVRLTSWTNSGLHPTILETLKRIKYNNVRTIQGAMIPQVLDGHDVLGQAETSAGKTAAFGLPIIDKILRMDEETRNKARQDDGPLALILAPTRELAAQIHEALRTYCQNTDIIVLLSYGQSDRARSLNEIRNGCDILIGTCGRIMDFTVKSHISLLHLRFLVFDEADRLLQDMKKDPLGHLGAIIKDAGFMESAATRQTIMTSATFNASVMTVANELMKRLPGQDEMIKIVLANGRLSKRVNLEFFECKGLAEKNAKLREILKQNVNGKTLKTIIFVQKKDQCDACAAKLTSGGMLAQTLHGDRSQDMREKLINDFKSNRVNLLVTTDLLSRGIDVSDLDRVINFDLPDGDPDQGADTFIHRAGRTGRTGRKENGLCVSFVDPQSDRDSLLAPKLVELIISQNLPDLKVPDFLDAMAKSSRGKSGTSGFGQRGGYGGRGGGFGGTGRGRGGGVFGGGGRGGDFGGSGNFGGSGGGGSFGGSGGGGGFGGVKPSGFGGSRNNAEPTSSGGGFGAPKAPTGFPSDNNDASEDAPAAGGFGFSTKAAQDAKKAEESATLGSSTFGTANNADEEPTETGADGNDDDEW.

The segment at 1–336 is disordered; the sequence is MSSFGNNAGG…EGVNAPVRAP (336 aa). Residues 71 to 97 show a composition bias toward basic and acidic residues; that stretch reads GRREDDRSHSRDNHGGSRYGERDDRGN. The span at 98 to 118 shows a compositional bias: polar residues; sequence NGRSADNRYSQSNYNYDSNRG. A compositionally biased stretch (basic and acidic residues) spans 122-134; sequence YQRDNHGSKDDRG. Residues 137–160 are compositionally biased toward polar residues; sequence NQYNDHGSNHNSNSRNDQYRQGSY. Basic and acidic residues-rich tracts occupy residues 166 to 181 and 189 to 201; these read SGYR…DNDQ and RDSD…DHHN. Residues 202-213 show a composition bias toward polar residues; it reads YNSQSSPRSHQG. Composition is skewed to basic and acidic residues over residues 219-239 and 255-270; these read SAPK…HDSY and YRND…DHRS. Over residues 271-280 the composition is skewed to low complexity; it reads GGNNSSSGFK. Gly residues predominate over residues 281 to 301; the sequence is NDGGFGGNDNRGFGNNGGGSF. Residues 302–317 are compositionally biased toward low complexity; sequence GNPNNSYRGNSNNIGG. Residues 380 to 408 carry the Q motif motif; the sequence is TSWTNSGLHPTILETLKRIKYNNVRTIQG. Residues 411 to 599 enclose the Helicase ATP-binding domain; the sequence is IPQVLDGHDV…NELMKRLPGQ (189 aa). 424-431 provides a ligand contact to ATP; it reads AETSAGKT. Residues 539 to 542 carry the DEAD box motif; that stretch reads DEAD. The region spanning 632–792 is the Helicase C-terminal domain; sequence KLREILKQNV…KVPDFLDAMA (161 aa). 2 disordered regions span residues 793 to 834 and 858 to 959; these read KSSR…GGGR and GGGG…DDEW. Composition is skewed to gly residues over residues 800 to 834 and 858 to 872; these read GTSG…GGGR and GGGG…GFGG. The span at 930-941 shows a compositional bias: polar residues; the sequence is TLGSSTFGTANN. Residues 942 to 959 show a composition bias toward acidic residues; sequence ADEEPTETGADGNDDDEW.

The protein belongs to the DEAD box helicase family. DDX3/DED1 subfamily. Interacts with wago-1, ergo-1 and rde-1. Mg(2+) is required as a cofactor. As to expression, expressed in the soma and germline.

Its subcellular location is the cytoplasm. It localises to the perinuclear region. It is found in the cytoplasmic granule. The protein localises to the P-body. The catalysed reaction is ATP + H2O = ADP + phosphate + H(+). In terms of biological role, probable ATP-dependent RNA helicase involved in RNAi-mediated gene silencing. Specifically required in the endogenous siRNA pathway for biogenesis of secondary endogenous small interfering RNA (siRNA) intermediates called 22G-RNAs. May associate with and recruit rde-10 to primary siRNA-targeted mRNA for secondary siRNA synthesis. May be recruited to target mRNAs by rde-1 and/or ergo-1. The polypeptide is DEAD-box ATP-dependent RNA helicase rde-12 (Caenorhabditis elegans).